The chain runs to 406 residues: Pyridinium-3,5-bisthiocarboxylic acid mononucleotide nickel insertion protein (406 aa).

Belongs to the LarC family.

It catalyses the reaction Ni(II)-pyridinium-3,5-bisthiocarboxylate mononucleotide = pyridinium-3,5-bisthiocarboxylate mononucleotide + Ni(2+). Functionally, involved in the biosynthesis of a nickel-pincer cofactor ((SCS)Ni(II) pincer complex). Binds Ni(2+), and functions in nickel delivery to pyridinium-3,5-bisthiocarboxylic acid mononucleotide (P2TMN), to form the mature cofactor. Is thus probably required for the activation of nickel-pincer cofactor-dependent enzymes. The polypeptide is Pyridinium-3,5-bisthiocarboxylic acid mononucleotide nickel insertion protein (Akkermansia muciniphila (strain ATCC BAA-835 / DSM 22959 / JCM 33894 / BCRC 81048 / CCUG 64013 / CIP 107961 / Muc)).